A 159-amino-acid chain; its full sequence is Transcription elongation factor GreA (159 aa).

A coiled-coil region spans residues 14 to 76 (IKKLENELEY…QLENMLKNAS (63 aa)).

The protein belongs to the GreA/GreB family.

Necessary for efficient RNA polymerase transcription elongation past template-encoded arresting sites. The arresting sites in DNA have the property of trapping a certain fraction of elongating RNA polymerases that pass through, resulting in locked ternary complexes. Cleavage of the nascent transcript by cleavage factors such as GreA or GreB allows the resumption of elongation from the new 3'terminus. GreA releases sequences of 2 to 3 nucleotides. This is Transcription elongation factor GreA from Clostridium kluyveri (strain NBRC 12016).